The following is an 86-amino-acid chain: Electron transfer flavoprotein regulatory factor 1 (86 aa).

The protein belongs to the complex I LYR family.

The protein resides in the mitochondrion. Acts as a regulator of the electron transfer flavoprotein by promoting the removal of flavin from the ETF holoenzyme (composed of ETFA and ETFB). This is Electron transfer flavoprotein regulatory factor 1 from Taeniopygia guttata (Zebra finch).